We begin with the raw amino-acid sequence, 1104 residues long: Protein KIBRA (1104 aa).

WW domains follow at residues 6 to 39 (LPLP…DPRD) and 53 to 86 (DELP…DPRV). The stretch at 107–193 (LSAQKEIYQV…ELQFKERGFQ (87 aa)) forms a coiled coil. Phosphoserine is present on serine 141. Disordered regions lie at residues 429-449 (SMQS…RGSL) and 509-547 (TQKA…SPPC). Low complexity predominate over residues 527–542 (TPRSMTSLSPRSSLSS). At serine 535 the chain carries Phosphoserine. The residue at position 542 (serine 542) is a Phosphoserine; by CDK1. Residues 659–782 (GATRVQIALK…RSGERSTRWY (124 aa)) enclose the C2 domain. A disordered region spans residues 822-949 (LEKRQEGRSS…DSSTLSKKPP (128 aa)). Residues 836-1104 (EGSWTYEEEA…NIPALSADDV (269 aa)) are interaction with histone H3. Residues 841–862 (YEEEASENEAVAEEEEEGEEDV) show a composition bias toward acidic residues. Phosphoserine is present on residues serine 887, serine 891, and serine 919. The span at 916–930 (IIRSKTFSPGPQSQY) shows a compositional bias: polar residues. Threonine 921 bears the Phosphothreonine mark. Residue serine 923 is modified to Phosphoserine; by CDK1. Serine 939 carries the phosphoserine modification. 2 interaction with PRKCZ regions span residues 945–988 (SKKP…LDLQ) and 948–967 (PPFV…RPSS). Residues serine 967 and serine 970 each carry the phosphoserine; by PKC/PRKCZ modification. The stretch at 994 to 1024 (HSQLTQEISVLKELKEHLEQAKNHGEKELPQ) forms a coiled coil. Residues 1102–1104 (DDV) carry the ADDV motif motif.

This sequence belongs to the WWC family. KIBRA subfamily. As to quaternary structure, homodimer. Forms heterodimers with WWC2 and WWC3. Interacts with DDN. Interacts with DYNLL1 and histone H3. The interaction with DYNLL1 is mandatory for the recruitment and transactivation functions of ESR1 or DYNLL1 to the target chromatin and the interaction with histone H3 ensures proper regulatory interaction of WWC1-DYNLL1-ESR1 complexes with target chromatin. Interacts (via WW domains) with DDR1 (via PPxY motif) in a collagen-regulated manner. Interacts with PRKCZ (via the protein kinase domain). Forms a tripartite complex with DDR1 and PRKCZ, but predominantly in the absence of collagen. Interacts (via the ADDV motif) with PATJ (via PDZ domain 8). Interacts (via WW domains) with SYNPO (via PPxY motifs). Interacts with NF2 and SNX4. Interacts with CCDC141; retains AMPAR in the cytosol after internalization. Interacts with DLC1 and PRKCZ. Interacts (via WW domains) with LATS1 and LATS2. In terms of processing, phosphorylation at Ser-542 and Ser-923 by CDK1 in response to spindle damage stress regulates mitotic exit, these two sites are dephosphorylated by CDC14B. Mammary epithelium.

It localises to the cytoplasm. Its subcellular location is the perinuclear region. The protein resides in the nucleus. It is found in the cell projection. The protein localises to the ruffle membrane. It localises to the cytosol. Its function is as follows. Regulator of the Hippo signaling pathway, also known as the Salvador-Warts-Hippo (SWH) pathway. Enhances phosphorylation of LATS1 and YAP1 and negatively regulates cell proliferation and organ growth due to a suppression of the transcriptional activity of YAP1, the major effector of the Hippo pathway. Along with NF2 can synergistically induce the phosphorylation of LATS1 and LATS2 and function in the regulation of Hippo signaling pathway. Acts as a transcriptional coactivator of ESR1 which plays an essential role in DYNLL1-mediated ESR1 transactivation. Modulates directional migration of podocytes. May be associated with memory performance. Regulates collagen-stimulated activation of the ERK/MAPK cascade. Plays an important role in regulating AMPA-selective glutamate receptors (AMPARs) trafficking. This Mus musculus (Mouse) protein is Protein KIBRA (Wwc1).